Here is a 186-residue protein sequence, read N- to C-terminus: uncharacterized protein (186 aa).

Asparagine 34 is a glycosylation site (N-linked (GlcNAc...) asparagine; by host). Helical transmembrane passes span 47 to 67 (IGMVVSSLMLLLVYFCFATTF), 114 to 134 (ILETVGFGLLHLKIALVIVLL), and 144 to 164 (LEMIYNKIVYFDTIGFYTLFF).

It is found in the membrane. This is an uncharacterized protein from Acanthamoeba polyphaga mimivirus (APMV).